The following is a 1026-amino-acid chain: Multidrug resistance protein MdtC (1026 aa).

A run of 11 helical transmembrane segments spans residues 15–35 (ILIAAAITLCGILGFRLLPVA), 333–353 (EVEETLAISVALVILVVFLFL), 360–380 (LIPAVAVPVSLIGTFAAMYLC), 387–407 (LSLMALTIATGFVVDDAIVVL), 431–451 (VGFTVISMSLSLVAVFLPLLL), 463–483 (FAVTLSVAIGISLVVSLTLTP), 528–548 (LVGVVFLGTVALNIWLYIAIP), 853–873 (LILIVAAIATVYIVLGILYES), 897–917 (LFNAPFSLIALIGIMLLIGIV), 953–973 (PIMMTTLAALFGALPLVLSGG), and 984–1004 (ITIVGGLVMSQLLTLYTTPVV).

It belongs to the resistance-nodulation-cell division (RND) (TC 2.A.6) family. MdtC subfamily. As to quaternary structure, part of a tripartite efflux system composed of MdtA, MdtB and MdtC. MdtC forms a heteromultimer with MdtB.

The protein resides in the cell inner membrane. The polypeptide is Multidrug resistance protein MdtC (Salmonella gallinarum (strain 287/91 / NCTC 13346)).